The following is a 312-amino-acid chain: Small ribosomal subunit protein uS2 (312 aa).

It belongs to the universal ribosomal protein uS2 family.

The protein is Small ribosomal subunit protein uS2 of Ruthia magnifica subsp. Calyptogena magnifica.